A 445-amino-acid chain; its full sequence is MNIEKIMSSLEAKHPGESEYLQAVKEVLLSIEDIYNQHPEFEKSKIIERLVEPDRIFTFRVTWVDDKGEVQTNLGYRVQFNNAIGPYKGGIRFHASVNLSILKFLGFEQTFKNALTTLPMGGGKGGSDFSPRGKSDAEIMRFCQAFMLELWRHLGPDMDVPAGDIGVGGREVGYMFGMYKKLTREFTGTFTGKGLEFGGSLIRPEATGFGGLYFVNQMLQTKGIDIKGKTVAISGFGNVAWGAATKATELGAKVVTISGPDGYIYDPNGISGEKIDYMLELRASGNDIVAPYADEFPGSTFVAGKRPWEVKADIALPCATQNELNGEDAKNLIDNNVLCVGEISNMGCTPEAIDLFIEHKTMYAPGKAVNAGGVATSGLEMSQNAMHLSWSAAEVDEKLHSIMHGIHAQCVKYGTEPDGYINYVKGANIAGFMKVAHAMMGQGII.

The active site involves lysine 124. 235–241 (GFGNVAW) contacts NAD(+).

This sequence belongs to the Glu/Leu/Phe/Val dehydrogenases family. As to quaternary structure, homohexamer.

The catalysed reaction is L-glutamate + NAD(+) + H2O = 2-oxoglutarate + NH4(+) + NADH + H(+). The protein is NAD-specific glutamate dehydrogenase (gdhB) of Bacteroides fragilis (strain YCH46).